Reading from the N-terminus, the 1700-residue chain is Rho guanine nucleotide exchange factor 28 (1700 aa).

A disordered region spans residues 288–335 (TERATMPSGAAETEEEVRNLESGRSPSEEEEDGQLVKSQADGPSEQED). 3 positions are modified to phosphoserine: Ser312, Ser314, and Ser478. The interval 483-525 (VADSEEEGRSEPPICYAVGSQSSPRTGLPGGDELDSFDANTEP) is disordered. At Ser623 the chain carries Phosphoserine. A Phorbol-ester/DAG-type zinc finger spans residues 651–698 (RHQFVPGTFSGVLQCSGCDKTLLGKESLQCANCKANTHKGCKDTVPPC). Positions 709–720 (NKPQTILGSSSV) are enriched in polar residues. Disordered stretches follow at residues 709–761 (NKPQ…VPGT) and 774–799 (ESEG…GSSP). Over residues 728–737 (LSLHPSPSMP) the composition is skewed to low complexity. Polar residues predominate over residues 774–783 (ESEGDSNSWR). A DH domain is found at 848 to 1043 (KRQDVIFELM…KDMIAAVDLK (196 aa)). The region spanning 1085 to 1187 (ALLHDGLVYW…WMRRIQQAVE (103 aa)) is the PH domain. The disordered stretch occupies residues 1186–1207 (VESCPEEEGGRTSESDEERRKA). Residues 1193–1207 (EGGRTSESDEERRKA) are compositionally biased toward basic and acidic residues. Positions 1294–1303 (DVSQPSEEGP) are interaction with PTK2/FAK1; required for regulation of axonal branching and synapse formation. The tract at residues 1369 to 1380 (IIQAIQNLTRLL) is mediates cytoplasmic retention and interaction with YWHAH. The tract at residues 1421 to 1700 (QEKSRYLEKH…DGAEENIVYL (280 aa)) is interaction with microtubules. Residues 1473 to 1522 (ERECQSQEELLLRHRSELDHQLQEYQQNLERLREGQRMVERERQRMRDQQ) are a coiled coil. Residues 1493 to 1524 (QLQEYQQNLERLREGQRMVERERQRMRDQQGL) are RNA-binding. The residue at position 1535 (Ser1535) is a Phosphoserine. Positions 1563–1576 (FLNDAFTHMSLNTS) are mediates cytoplasmic retention and interaction with MAPK8IP1. The tract at residues 1574 to 1598 (NTSNKPNPSGAPWDAHPPGGSHLDL) is disordered. Residue Ser1604 is modified to Phosphoserine. Residues 1612–1700 (VSQPSDVNSE…DGAEENIVYL (89 aa)) are disordered. Over residues 1613-1623 (SQPSDVNSELW) the composition is skewed to polar residues. Basic and acidic residues predominate over residues 1633 to 1642 (ARQESIKDSC). Polar residues predominate over residues 1647-1672 (DLNSFQTESPDPQDSNQRGPQPQTLI).

In terms of assembly, homooligomer; forms cytoplasmic aggregates. Forms a complex with MAPK8 and MAPK8IP1. Interacts with RHOA. Interacts with microtubules. Interacts with YWHAE and YWHAH. Interacts with PTK2/FAK1. Interacts with NEFL. Interacts with CTNND2; prevents interaction with RHOA. Phosphorylated on tyrosine upon stimulation of cells by laminin.

Its subcellular location is the cytoplasm. It is found in the cell membrane. In terms of biological role, functions as a RHOA-specific guanine nucleotide exchange factor regulating signaling pathways downstream of integrins and growth factor receptors. Functions in axonal branching, synapse formation and dendritic morphogenesis. Also functions in focal adhesion formation, cell motility and B-lymphocytes activation. May regulate NEFL expression and aggregation and play a role in apoptosis. This Rattus norvegicus (Rat) protein is Rho guanine nucleotide exchange factor 28 (Arhgef28).